The primary structure comprises 80 residues: MMAGRRSWPAMATVLLALLVCLGELVDSKPQPSDEKASPDKHHRFSLSRYAKLANRLANPKLLETFLSKWIGDRGNRSVK.

The signal sequence occupies residues 1–32; it reads MMAGRRSWPAMATVLLALLVCLGELVDSKPQP.

Inhibits calcium transport into spermatozoa; it does not bind directly to calcium. Binds to calmodulin. Inhibits the growth of microorganisms. Seem to act as an antibiotic by permeabilizing the bacterial membrane. The polypeptide is Caltrin (PYY2) (Bos taurus (Bovine)).